Consider the following 318-residue polypeptide: Methionyl-tRNA formyltransferase (318 aa).

110–113 (SLLP) serves as a coordination point for (6S)-5,6,7,8-tetrahydrofolate.

Belongs to the Fmt family.

It carries out the reaction L-methionyl-tRNA(fMet) + (6R)-10-formyltetrahydrofolate = N-formyl-L-methionyl-tRNA(fMet) + (6S)-5,6,7,8-tetrahydrofolate + H(+). Attaches a formyl group to the free amino group of methionyl-tRNA(fMet). The formyl group appears to play a dual role in the initiator identity of N-formylmethionyl-tRNA by promoting its recognition by IF2 and preventing the misappropriation of this tRNA by the elongation apparatus. In Ligilactobacillus salivarius (strain UCC118) (Lactobacillus salivarius), this protein is Methionyl-tRNA formyltransferase.